A 456-amino-acid polypeptide reads, in one-letter code: Bifunctional protein GlmU (456 aa).

Residues 1–229 are pyrophosphorylase; the sequence is MLNNAMSVVI…LSEVEGVNNR (229 aa). UDP-N-acetyl-alpha-D-glucosamine contacts are provided by residues 11-14, K25, Q76, 81-82, 103-105, G140, E154, N169, and N227; these read LAAG, GT, and YGD. Residue D105 participates in Mg(2+) binding. N227 contacts Mg(2+). A linker region spans residues 230–250; the sequence is LQLSRLERVYQSEQAEKLLLA. Residues 251 to 456 are N-acetyltransferase; that stretch reads GVMLRDPARF…EGWRRPVKKK (206 aa). Residues R333 and K351 each contribute to the UDP-N-acetyl-alpha-D-glucosamine site. The active-site Proton acceptor is H363. Y366 and N377 together coordinate UDP-N-acetyl-alpha-D-glucosamine. Acetyl-CoA-binding positions include A380, 386–387, S405, A423, and R440; that span reads NY.

It in the N-terminal section; belongs to the N-acetylglucosamine-1-phosphate uridyltransferase family. This sequence in the C-terminal section; belongs to the transferase hexapeptide repeat family. Homotrimer. Mg(2+) is required as a cofactor.

Its subcellular location is the cytoplasm. It catalyses the reaction alpha-D-glucosamine 1-phosphate + acetyl-CoA = N-acetyl-alpha-D-glucosamine 1-phosphate + CoA + H(+). It carries out the reaction N-acetyl-alpha-D-glucosamine 1-phosphate + UTP + H(+) = UDP-N-acetyl-alpha-D-glucosamine + diphosphate. It functions in the pathway nucleotide-sugar biosynthesis; UDP-N-acetyl-alpha-D-glucosamine biosynthesis; N-acetyl-alpha-D-glucosamine 1-phosphate from alpha-D-glucosamine 6-phosphate (route II): step 2/2. It participates in nucleotide-sugar biosynthesis; UDP-N-acetyl-alpha-D-glucosamine biosynthesis; UDP-N-acetyl-alpha-D-glucosamine from N-acetyl-alpha-D-glucosamine 1-phosphate: step 1/1. Its pathway is bacterial outer membrane biogenesis; LPS lipid A biosynthesis. Functionally, catalyzes the last two sequential reactions in the de novo biosynthetic pathway for UDP-N-acetylglucosamine (UDP-GlcNAc). The C-terminal domain catalyzes the transfer of acetyl group from acetyl coenzyme A to glucosamine-1-phosphate (GlcN-1-P) to produce N-acetylglucosamine-1-phosphate (GlcNAc-1-P), which is converted into UDP-GlcNAc by the transfer of uridine 5-monophosphate (from uridine 5-triphosphate), a reaction catalyzed by the N-terminal domain. This Shigella boydii serotype 4 (strain Sb227) protein is Bifunctional protein GlmU.